A 332-amino-acid polypeptide reads, in one-letter code: Large ribosomal subunit protein uL29m (332 aa).

Residues 19–40 are disordered; sequence RFTKPKPKPAKRENVRLPTQRT. Residues 264-327 are a coiled coil; sequence TSENTESAIA…IQLQEEDAKN (64 aa).

Belongs to the universal ribosomal protein uL29 family. Component of the mitochondrial large ribosomal subunit. Mature mitochondrial ribosomes consist of a small (37S) and a large (54S) subunit. The 37S subunit contains at least 33 different proteins and 1 molecule of RNA (15S). The 54S subunit contains at least 45 different proteins and 1 molecule of RNA (21S).

It localises to the mitochondrion. This Kluyveromyces lactis (strain ATCC 8585 / CBS 2359 / DSM 70799 / NBRC 1267 / NRRL Y-1140 / WM37) (Yeast) protein is Large ribosomal subunit protein uL29m (MRPL4).